A 240-amino-acid polypeptide reads, in one-letter code: uncharacterized protein (240 aa).

A compositionally biased stretch (basic residues) spans 1–11 (MGMTPRRKRRG). A disordered region spans residues 1–32 (MGMTPRRKRRGGAVQITRPTGRPRTPTTQTTK). Positions 17–31 (TRPTGRPRTPTTQTT) are enriched in low complexity. 6 consecutive transmembrane segments (helical) span residues 36-56 (WVVG…VELI), 93-113 (LMAN…AGLS), 115-135 (FVWA…LIGN), 146-166 (IGAS…GLFV), 172-192 (IVIG…AMPV), and 198-218 (GVSW…AYLL).

The protein to M.leprae ML1171.

The protein localises to the cell membrane. This is an uncharacterized protein from Mycobacterium tuberculosis (strain CDC 1551 / Oshkosh).